Here is a 445-residue protein sequence, read N- to C-terminus: 3-phosphoshikimate 1-carboxyvinyltransferase (445 aa).

Positions 28, 29, and 33 each coordinate 3-phosphoshikimate. Position 28 (Lys28) interacts with phosphoenolpyruvate. Residues Gly101 and Arg129 each contribute to the phosphoenolpyruvate site. 3-phosphoshikimate-binding residues include Ser175, Gln177, Asp328, and Lys355. A phosphoenolpyruvate-binding site is contributed by Gln177. Asp328 functions as the Proton acceptor in the catalytic mechanism. The phosphoenolpyruvate site is built by Arg359 and Arg402.

It belongs to the EPSP synthase family. As to quaternary structure, monomer.

The protein resides in the cytoplasm. It carries out the reaction 3-phosphoshikimate + phosphoenolpyruvate = 5-O-(1-carboxyvinyl)-3-phosphoshikimate + phosphate. It participates in metabolic intermediate biosynthesis; chorismate biosynthesis; chorismate from D-erythrose 4-phosphate and phosphoenolpyruvate: step 6/7. Catalyzes the transfer of the enolpyruvyl moiety of phosphoenolpyruvate (PEP) to the 5-hydroxyl of shikimate-3-phosphate (S3P) to produce enolpyruvyl shikimate-3-phosphate and inorganic phosphate. This is 3-phosphoshikimate 1-carboxyvinyltransferase from Bradyrhizobium sp. (strain BTAi1 / ATCC BAA-1182).